The primary structure comprises 270 residues: Large ribosomal subunit protein bL21m (270 aa).

Residues 1-68 (MASLRCFREL…HWYRSQDRCF (68 aa)) constitute a mitochondrion transit peptide. Residues 68-113 (FSSNTKDTDEDEESSEGEDDDEEEGEDFEDSADMEVEREYSPAEKV) form a disordered region. The span at 75–101 (TDEDEESSEGEDDDEEEGEDFEDSADM) shows a compositional bias: acidic residues. The span at 102 to 113 (EVEREYSPAEKV) shows a compositional bias: basic and acidic residues.

The protein belongs to the bacterial ribosomal protein bL21 family. As to quaternary structure, component of the mitochondrial ribosome large subunit. In terms of tissue distribution, constitutively expressed in roots, stems, leaves, flowers, pistils and siliques.

It is found in the mitochondrion. In terms of biological role, this protein binds to 23S ribosomal RNA in the presence of protein L20. Required for karyogamy during female gametophyte development, when the two polar nuclei fuse to form the diploid central cell nucleus, and during double fertilization of the egg cell and the central cell. The sequence is that of Large ribosomal subunit protein bL21m from Arabidopsis thaliana (Mouse-ear cress).